We begin with the raw amino-acid sequence, 351 residues long: UDP-3-O-acylglucosamine N-acyltransferase (351 aa).

Catalysis depends on His-239, which acts as the Proton acceptor.

The protein belongs to the transferase hexapeptide repeat family. LpxD subfamily. Homotrimer.

The enzyme catalyses a UDP-3-O-[(3R)-3-hydroxyacyl]-alpha-D-glucosamine + a (3R)-hydroxyacyl-[ACP] = a UDP-2-N,3-O-bis[(3R)-3-hydroxyacyl]-alpha-D-glucosamine + holo-[ACP] + H(+). Its pathway is bacterial outer membrane biogenesis; LPS lipid A biosynthesis. Functionally, catalyzes the N-acylation of UDP-3-O-acylglucosamine using 3-hydroxyacyl-ACP as the acyl donor. Is involved in the biosynthesis of lipid A, a phosphorylated glycolipid that anchors the lipopolysaccharide to the outer membrane of the cell. This chain is UDP-3-O-acylglucosamine N-acyltransferase, found in Vibrio cholerae serotype O1 (strain ATCC 39315 / El Tor Inaba N16961).